We begin with the raw amino-acid sequence, 154 residues long: Transcriptional repressor NrdR (154 aa).

The segment at Cys-3–Cys-34 is a zinc-finger region. One can recognise an ATP-cone domain in the interval Leu-46–Asp-136.

This sequence belongs to the NrdR family. Zn(2+) serves as cofactor.

Functionally, negatively regulates transcription of bacterial ribonucleotide reductase nrd genes and operons by binding to NrdR-boxes. The protein is Transcriptional repressor NrdR of Salinispora tropica (strain ATCC BAA-916 / DSM 44818 / JCM 13857 / NBRC 105044 / CNB-440).